The sequence spans 362 residues: Mitochondrial distribution and morphology protein 12 (362 aa).

The region spanning 1 to 361 (MSFDINWSQL…WPSWLCFDMS (361 aa)) is the SMP-LTD domain. Disordered stretches follow at residues 65-141 (DFYE…AATP) and 170-207 (TPSGRDTPTQILNQMRTGPNSPPISNTPISSSKKSKRG). 2 stretches are compositionally biased toward polar residues: residues 106–119 (VTLSETTESKTQFA) and 170–187 (TPSGRDTPTQILNQMRTG). Residues 192–201 (PISNTPISSS) show a composition bias toward low complexity.

This sequence belongs to the MDM12 family. As to quaternary structure, component of the ER-mitochondria encounter structure (ERMES) or MDM complex, composed of MMM1, MDM10, MDM12 and MDM34. An MMM1 homodimer associates with one molecule of MDM12 on each side in a pairwise head-to-tail manner, and the SMP-LTD domains of MMM1 and MDM12 generate a continuous hydrophobic tunnel for phospholipid trafficking.

Its subcellular location is the mitochondrion outer membrane. It localises to the endoplasmic reticulum membrane. In terms of biological role, component of the ERMES/MDM complex, which serves as a molecular tether to connect the endoplasmic reticulum (ER) and mitochondria. Components of this complex are involved in the control of mitochondrial shape and protein biogenesis, and function in nonvesicular lipid trafficking between the ER and mitochondria. MDM12 is required for the interaction of the ER-resident membrane protein MMM1 and the outer mitochondrial membrane-resident beta-barrel protein MDM10. The MDM12-MMM1 subcomplex functions in the major beta-barrel assembly pathway that is responsible for biogenesis of all mitochondrial outer membrane beta-barrel proteins, and acts in a late step after the SAM complex. The MDM10-MDM12-MMM1 subcomplex further acts in the TOM40-specific pathway after the action of the MDM12-MMM1 complex. Essential for establishing and maintaining the structure of mitochondria and maintenance of mtDNA nucleoids. The protein is Mitochondrial distribution and morphology protein 12 of Meyerozyma guilliermondii (strain ATCC 6260 / CBS 566 / DSM 6381 / JCM 1539 / NBRC 10279 / NRRL Y-324) (Yeast).